Here is a 182-residue protein sequence, read N- to C-terminus: NADH-quinone oxidoreductase subunit I (182 aa).

2 consecutive 4Fe-4S ferredoxin-type domains span residues 52 to 82 (LTRDPDGEERCVACNLCAVACPVGCISLQKA) and 92 to 121 (EFFRINFSRCIFCGLCEEACPTTAIQLTPD). The [4Fe-4S] cluster site is built by Cys-62, Cys-65, Cys-68, Cys-72, Cys-101, Cys-104, Cys-107, and Cys-111.

Belongs to the complex I 23 kDa subunit family. In terms of assembly, NDH-1 is composed of 13 different subunits. Subunits NuoA, H, J, K, L, M, N constitute the membrane sector of the complex. The cofactor is [4Fe-4S] cluster.

The protein localises to the cell inner membrane. It catalyses the reaction a quinone + NADH + 5 H(+)(in) = a quinol + NAD(+) + 4 H(+)(out). In terms of biological role, NDH-1 shuttles electrons from NADH, via FMN and iron-sulfur (Fe-S) centers, to quinones in the respiratory chain. The immediate electron acceptor for the enzyme in this species is believed to be ubiquinone. Couples the redox reaction to proton translocation (for every two electrons transferred, four hydrogen ions are translocated across the cytoplasmic membrane), and thus conserves the redox energy in a proton gradient. The sequence is that of NADH-quinone oxidoreductase subunit I from Pseudomonas aeruginosa (strain LESB58).